Here is a 455-residue protein sequence, read N- to C-terminus: Phosphoglucosamine mutase (455 aa).

Ser104 functions as the Phosphoserine intermediate in the catalytic mechanism. Mg(2+) is bound by residues Ser104, Asp243, Asp245, and Asp247. Ser104 is modified (phosphoserine).

The protein belongs to the phosphohexose mutase family. Requires Mg(2+) as cofactor. Post-translationally, activated by phosphorylation.

The catalysed reaction is alpha-D-glucosamine 1-phosphate = D-glucosamine 6-phosphate. Functionally, catalyzes the conversion of glucosamine-6-phosphate to glucosamine-1-phosphate. The protein is Phosphoglucosamine mutase of Synechococcus sp. (strain CC9311).